A 130-amino-acid chain; its full sequence is Putative protein ZNF815 (130 aa).

In Homo sapiens (Human), this protein is Putative protein ZNF815 (ZNF815P).